The primary structure comprises 157 residues: ATP synthase subunit b', chloroplastic (157 aa).

Residues 26–43 (LMASQFLLIMLILDITFY) form a helical membrane-spanning segment.

This sequence belongs to the ATPase B chain family. F-type ATPases have 2 components, F(1) - the catalytic core - and F(0) - the membrane proton channel. F(1) has five subunits: alpha(3), beta(3), gamma(1), delta(1), epsilon(1). F(0) has four main subunits: a(1), b(1), b'(1) and c(10-14). The alpha and beta chains form an alternating ring which encloses part of the gamma chain. F(1) is attached to F(0) by a central stalk formed by the gamma and epsilon chains, while a peripheral stalk is formed by the delta, b and b' chains.

It localises to the plastid. The protein localises to the chloroplast thylakoid membrane. Its function is as follows. F(1)F(0) ATP synthase produces ATP from ADP in the presence of a proton or sodium gradient. F-type ATPases consist of two structural domains, F(1) containing the extramembraneous catalytic core and F(0) containing the membrane proton channel, linked together by a central stalk and a peripheral stalk. During catalysis, ATP synthesis in the catalytic domain of F(1) is coupled via a rotary mechanism of the central stalk subunits to proton translocation. Component of the F(0) channel, it forms part of the peripheral stalk, linking F(1) to F(0). The b'-subunit is a diverged and duplicated form of b found in plants and photosynthetic bacteria. The protein is ATP synthase subunit b', chloroplastic of Cyanidium caldarium (Red alga).